The primary structure comprises 337 residues: MEFTDFSKTSFYYPSSQSVWDFGDLAAAERHSLGFMELLSSQQHQDFATVSPHSFLLQTSQPQTQTQPSAKLSSSIIQAPPSEQLVTSKVESLCSDHLLINPPATPNSSSISSASSEALNEEKPKTEDNEEEGGEDQQEKSHTKKQLKAKKNNQKRQREARVAFMTKSEVDHLEDGYRWRKYGQKAVKNSPFPRSYYRCTTASCNVKKRVERSFRDPSTVVTTYEGQHTHISPLTSRPISTGGFFGSSGAASSLGNGCFGFPIDGSTLISPQFQQLVQYHHQQQQQELMSCFGGVNEYLNSHANEYGDDNRVKKSRVLVKDNGLLQDVVPSHMLKEE.

The disordered stretch occupies residues Ile-100–Ala-160. The segment covering Pro-106–Ala-118 has biased composition (low complexity). The segment covering His-142–Lys-155 has biased composition (basic residues). A DNA-binding region (WRKY) is located at residues Ser-168–Pro-233.

This sequence belongs to the WRKY group II-c family.

The protein resides in the nucleus. In terms of biological role, transcription factor. Interacts specifically with the W box (5'-(T)TGAC[CT]-3'), a frequently occurring elicitor-responsive cis-acting element. The protein is WRKY transcription factor 23 (WRKY23) of Arabidopsis thaliana (Mouse-ear cress).